Reading from the N-terminus, the 353-residue chain is Protein-glutamate methylesterase/protein-glutamine glutaminase 3 (353 aa).

Residues 3 to 120 (KVLIADDSAL…SSSSDMKKVA (118 aa)) enclose the Response regulatory domain. 4-aspartylphosphate is present on Asp-54. The region spanning 158–353 (PRPGREVTKA…AREIIRAVNR (196 aa)) is the CheB-type methylesterase domain. Residues Ser-173, His-200, and Asp-296 contribute to the active site.

Belongs to the CheB family. Phosphorylated by CheA. Phosphorylation of the N-terminal regulatory domain activates the methylesterase activity.

The protein resides in the cytoplasm. It catalyses the reaction [protein]-L-glutamate 5-O-methyl ester + H2O = L-glutamyl-[protein] + methanol + H(+). It carries out the reaction L-glutaminyl-[protein] + H2O = L-glutamyl-[protein] + NH4(+). Its function is as follows. Involved in chemotaxis. Part of a chemotaxis signal transduction system that modulates chemotaxis in response to various stimuli. Catalyzes the demethylation of specific methylglutamate residues introduced into the chemoreceptors (methyl-accepting chemotaxis proteins or MCP) by CheR. Also mediates the irreversible deamidation of specific glutamine residues to glutamic acid. The chain is Protein-glutamate methylesterase/protein-glutamine glutaminase 3 from Syntrophomonas wolfei subsp. wolfei (strain DSM 2245B / Goettingen).